The sequence spans 371 residues: Protein OSB2, chloroplastic (371 aa).

The transit peptide at 1–20 (MSLISKSLARIECSPFFYPR) directs the protein to the chloroplast. The disordered stretch occupies residues 45–64 (GKTGNGERKQRAKAPAKTPE). The region spanning 97 to 195 (VANWVNLIGF…VLVQNLNFIQ (99 aa)) is the SSB domain. PDF region stretches follow at residues 237-289 (WNHL…PKLE) and 312-360 (WKDL…PKLP).

Expressed in the floral abscission zone.

The protein localises to the plastid. The protein resides in the chloroplast. In terms of biological role, binds preferentially single-stranded DNA. Does not bind to RNA. In Arabidopsis thaliana (Mouse-ear cress), this protein is Protein OSB2, chloroplastic (OSB2).